The primary structure comprises 89 residues: Small ribosomal subunit protein eS25A (89 aa).

This sequence belongs to the eukaryotic ribosomal protein eS25 family. Component of the small ribosomal subunit (SSU). Mature yeast ribosomes consist of a small (40S) and a large (60S) subunit. The 40S small subunit contains 1 molecule of ribosomal RNA (18S rRNA) and at least 33 different proteins. The large 60S subunit contains 3 rRNA molecules (25S, 5.8S and 5S rRNA) and at least 46 different proteins.

The protein resides in the cytoplasm. In terms of biological role, component of the ribosome, a large ribonucleoprotein complex responsible for the synthesis of proteins in the cell. The small ribosomal subunit (SSU) binds messenger RNAs (mRNAs) and translates the encoded message by selecting cognate aminoacyl-transfer RNA (tRNA) molecules. The large subunit (LSU) contains the ribosomal catalytic site termed the peptidyl transferase center (PTC), which catalyzes the formation of peptide bonds, thereby polymerizing the amino acids delivered by tRNAs into a polypeptide chain. The nascent polypeptides leave the ribosome through a tunnel in the LSU and interact with protein factors that function in enzymatic processing, targeting, and the membrane insertion of nascent chains at the exit of the ribosomal tunnel. This Schizosaccharomyces pombe (strain 972 / ATCC 24843) (Fission yeast) protein is Small ribosomal subunit protein eS25A (rps2502).